Here is a 130-residue protein sequence, read N- to C-terminus: Holo-[acyl-carrier-protein] synthase (130 aa).

Mg(2+) is bound by residues D9 and E58.

It belongs to the P-Pant transferase superfamily. AcpS family. The cofactor is Mg(2+).

It is found in the cytoplasm. The enzyme catalyses apo-[ACP] + CoA = holo-[ACP] + adenosine 3',5'-bisphosphate + H(+). Transfers the 4'-phosphopantetheine moiety from coenzyme A to a Ser of acyl-carrier-protein. The protein is Holo-[acyl-carrier-protein] synthase of Mycolicibacterium smegmatis (strain ATCC 700084 / mc(2)155) (Mycobacterium smegmatis).